A 361-amino-acid chain; its full sequence is Tetraacyldisaccharide 4'-kinase (361 aa).

Position 68 to 75 (68 to 75) interacts with ATP; the sequence is TVGGTGKT.

Belongs to the LpxK family.

It catalyses the reaction a lipid A disaccharide + ATP = a lipid IVA + ADP + H(+). The protein operates within glycolipid biosynthesis; lipid IV(A) biosynthesis; lipid IV(A) from (3R)-3-hydroxytetradecanoyl-[acyl-carrier-protein] and UDP-N-acetyl-alpha-D-glucosamine: step 6/6. Transfers the gamma-phosphate of ATP to the 4'-position of a tetraacyldisaccharide 1-phosphate intermediate (termed DS-1-P) to form tetraacyldisaccharide 1,4'-bis-phosphate (lipid IVA). In Pelobacter propionicus (strain DSM 2379 / NBRC 103807 / OttBd1), this protein is Tetraacyldisaccharide 4'-kinase.